A 172-amino-acid chain; its full sequence is Small ribosomal subunit protein uS5 (172 aa).

The S5 DRBM domain occupies 17 to 80 (MREKMIAVNR…EECRRNLVKV (64 aa)).

Belongs to the universal ribosomal protein uS5 family. Part of the 30S ribosomal subunit. Contacts proteins S4 and S8.

Functionally, with S4 and S12 plays an important role in translational accuracy. Its function is as follows. Located at the back of the 30S subunit body where it stabilizes the conformation of the head with respect to the body. This is Small ribosomal subunit protein uS5 from Paracidovorax citrulli (strain AAC00-1) (Acidovorax citrulli).